Consider the following 567-residue polypeptide: Lactase-like protein (567 aa).

The signal sequence occupies residues 1-21 (MKPVWVATLLWMLLLVPRLGA). At 23-541 (RKGSPEEASF…LLSHMQMVTE (519 aa)) the chain is on the extracellular side. N-linked (GlcNAc...) asparagine glycosylation is found at Asn-80, Asn-171, and Asn-245. Residues 542–562 (IVVPTVCSLCVLITAVLLMLL) traverse the membrane as a helical segment. The Cytoplasmic portion of the chain corresponds to 563–567 (LRRQS).

The protein belongs to the glycosyl hydrolase 1 family. Klotho subfamily. In terms of assembly, may form dimers.

It localises to the endoplasmic reticulum membrane. In terms of biological role, plays a role in formation of the lens suture in the eye, which is important for normal optical properties of the lens. The sequence is that of Lactase-like protein (LCTL) from Homo sapiens (Human).